Consider the following 326-residue polypeptide: Adenosine receptor A1 (326 aa).

Residues 1 to 10 (MPPSISAFQA) are Extracellular-facing. The helical transmembrane segment at 11-33 (AYIGIEVLIALVSVPGNVLVIWA) threads the bilayer. The Cytoplasmic segment spans residues 34–46 (VKVNQALRDATFC). A helical membrane pass occupies residues 47-69 (FIVSLAVADVAVGALVIPLAILI). Residues 70–80 (NIGPQTYFHTC) are Extracellular-facing. A disulfide bridge connects residues Cys80 and Cys169. Residues 81 to 102 (LMVACPVLILTQSSILALLAIA) traverse the membrane as a helical segment. The Cytoplasmic segment spans residues 103–123 (VDRYLRVKIPLRYKMVVTPRR). Residues 124 to 146 (AAVAIAGCWILSFVVGLTPMFGW) form a helical membrane-spanning segment. The Extracellular segment spans residues 147–176 (NNLSAVERAWAANGSMGEPVIKCEFEKVIS). Asn159 is a glycosylation site (N-linked (GlcNAc...) asparagine). A helical membrane pass occupies residues 177–201 (MEYMVYFNFFVWVLPPLLLMVLIYL). The Cytoplasmic segment spans residues 202–235 (EVFYLIRKQLNKKVSASSGDPQKYYGKELKIAKS). Residues 236 to 259 (LALILFLFALSWLPLHILNCITLF) form a helical membrane-spanning segment. Over 260-267 (CPSCHKPS) the chain is Extracellular. The chain crosses the membrane as a helical span at residues 268–292 (ILTYIAIFLTHGNSAMNPIVYAFRI). The Cytoplasmic portion of the chain corresponds to 293–326 (QKFRVTFLKIWNDHFRCQPAPPIDEDLPEERPDD). The S-palmitoyl cysteine moiety is linked to residue Cys309.

Belongs to the G-protein coupled receptor 1 family.

It is found in the cell membrane. Its function is as follows. Receptor for adenosine. The activity of this receptor is mediated by G proteins which inhibit adenylyl cyclase. This is Adenosine receptor A1 (ADORA1) from Homo sapiens (Human).